The following is a 239-amino-acid chain: Fatty acid metabolism regulator protein (239 aa).

The 69-residue stretch at 6 to 74 (QSPAGFAEEY…HGKPTKVNNF (69 aa)) folds into the HTH gntR-type domain. Residues 34–53 (ERELSELIGVTRTTLREVLQ) constitute a DNA-binding region (H-T-H motif).

In terms of assembly, homodimer.

The protein localises to the cytoplasm. Multifunctional regulator of fatty acid metabolism. The polypeptide is Fatty acid metabolism regulator protein (Enterobacter sp. (strain 638)).